Consider the following 483-residue polypeptide: Keratin, type II cytoskeletal 8 (483 aa).

Positions 1–16 (MSIRVTQKSYKVSTSG) are enriched in polar residues. The segment at 1 to 41 (MSIRVTQKSYKVSTSGPRAFSSRSYTSGPGSRISSSSFSRV) is disordered. Residues 1–90 (MSIRVTQKSY…DPNIQAVRTQ (90 aa)) are head. At Ser9 the chain carries Phosphoserine; by PKC/PRKCE. Residue Lys11 forms a Glycyl lysine isopeptide (Lys-Gly) (interchain with G-Cter in SUMO2) linkage. Residues Ser13, Ser15, Ser21, and Ser22 each carry the phosphoserine modification. Arg23 carries the post-translational modification Omega-N-methylarginine. At Ser24 the chain carries Phosphoserine; by PKC/PRKCE. The span at 24–41 (SYTSGPGSRISSSSFSRV) shows a compositional bias: low complexity. Residue Thr26 is modified to Phosphothreonine. Phosphoserine occurs at positions 27 and 31. Arg32 carries the omega-N-methylarginine modification. Ser34, Ser37, and Ser39 each carry phosphoserine. Residue Arg40 is modified to Omega-N-methylarginine. Phosphoserine occurs at positions 43 and 44. Arg47 is subject to Asymmetric dimethylarginine; alternate. Residue Arg47 is modified to Omega-N-methylarginine; alternate. Ser74 is modified (phosphoserine; by MAPK). The coil 1A stretch occupies residues 91–126 (EKEQIKTLNNKFASFIDKVRFLEQQNKMLETKWSLL). The 312-residue stretch at 91 to 402 (EKEQIKTLNN…KLLEGEESRL (312 aa)) folds into the IF rod domain. Position 101 is an N6-malonyllysine (Lys101). Residues Lys122 and Lys130 each participate in a glycyl lysine isopeptide (Lys-Gly) (interchain with G-Cter in SUMO2) cross-link. A linker 1 region spans residues 127–143 (QQQKTARSNMDNMFESY). The segment at 144 to 235 (INNLRRQLET…QLYEEEIREL (92 aa)) is coil 1B. Residue Lys197 forms a Glycyl lysine isopeptide (Lys-Gly) (interchain with G-Cter in SUMO1); alternate linkage. Lys197 participates in a covalent cross-link: Glycyl lysine isopeptide (Lys-Gly) (interchain with G-Cter in SUMO2); alternate. Lys207 carries the N6-acetyllysine modification. Residue Tyr228 is modified to Phosphotyrosine. The segment at 236-259 (QSQISDTSVVLSMDNSRSLDMDSI) is linker 12. Phosphoserine is present on residues Ser253 and Ser258. The interval 260–398 (IAEVKAQYED…ATYRKLLEGE (139 aa)) is coil 2. The segment at 261–382 (AEVKAQYEDI…EYQELMNVKL (122 aa)) is necessary for interaction with PNN. Residue Lys264 forms a Glycyl lysine isopeptide (Lys-Gly) (interchain with G-Cter in SUMO2) linkage. Residue Ser274 is modified to Phosphoserine. Lys285 participates in a covalent cross-link: Glycyl lysine isopeptide (Lys-Gly) (interchain with G-Cter in SUMO2). Ser291 carries the post-translational modification Phosphoserine. A Glycyl lysine isopeptide (Lys-Gly) (interchain with G-Cter in SUMO2); alternate cross-link involves residue Lys295. The residue at position 295 (Lys295) is an N6-acetyllysine; alternate. Residue Lys304 forms a Glycyl lysine isopeptide (Lys-Gly) (interchain with G-Cter in SUMO2) linkage. Residue Lys325 forms a Glycyl lysine isopeptide (Lys-Gly) (interchain with G-Cter in SUMO2); alternate linkage. An N6-acetyllysine; alternate modification is found at Lys325. Ser330 is modified (phosphoserine). Residue Lys393 forms a Glycyl lysine isopeptide (Lys-Gly) (interchain with G-Cter in SUMO2) linkage. The tract at residues 399 to 483 (ESRLESGMQN…VSESSDVLPK (85 aa)) is tail. Ser400, Ser404, Ser410, Ser417, and Ser424 each carry phosphoserine. Ser432 carries the phosphoserine; by CaMK2 and MAPK modification. Lys472 participates in a covalent cross-link: Glycyl lysine isopeptide (Lys-Gly) (interchain with G-Cter in SUMO1); alternate. Lys472 is covalently cross-linked (Glycyl lysine isopeptide (Lys-Gly) (interchain with G-Cter in SUMO2); alternate). Residues Ser475, Ser477, and Ser478 each carry the phosphoserine modification.

It belongs to the intermediate filament family. Heterotetramer of two type I and two type II keratins. Forms a heterodimer with KRT18. Associates with KRT20. Interacts with PLEC isoform 1C, when in a heterodimer with KRT18. Interacts with PNN. When associated with KRT19, interacts with DMD. Interacts with TCHP. Interacts with APEX1. Interacts with GPER1. Interacts with EPPK1. Interacts with PKP1 and PKP2. As to quaternary structure, (Microbial infection) Interacts with hepatitis C virus/HCV core protein. In terms of processing, phosphorylation on serine residues is enhanced during EGF stimulation and mitosis. Ser-74 phosphorylation plays an important role in keratin filament reorganization. Post-translationally, O-glycosylated. O-GlcNAcylation at multiple sites increases solubility, and decreases stability by inducing proteasomal degradation. O-glycosylated (O-GlcNAcylated), in a cell cycle-dependent manner. In terms of tissue distribution, observed in muscle fibers accumulating in the costameres of myoplasm at the sarcolemma membrane in structures that contain dystrophin and spectrin. Expressed in gingival mucosa and hard palate of the oral cavity.

The protein resides in the cytoplasm. It localises to the nucleus. Its subcellular location is the nucleoplasm. It is found in the nucleus matrix. Together with KRT19, helps to link the contractile apparatus to dystrophin at the costameres of striated muscle. This Homo sapiens (Human) protein is Keratin, type II cytoskeletal 8 (KRT8).